The chain runs to 86 residues: Anti-adapter protein IraP (86 aa).

Residues 1-36 (MKNLIAELLVKLAEKEEESKELVAQVEALEIVVTAL) are a coiled coil.

It belongs to the IraP family. As to quaternary structure, interacts with RssB.

The protein localises to the cytoplasm. Its function is as follows. Inhibits RpoS proteolysis by regulating RssB activity, thereby increasing the stability of the sigma stress factor RpoS especially during phosphate starvation, but also in stationary phase and during nitrogen starvation. Its effect on RpoS stability is due to its interaction with RssB, which probably blocks the interaction of RssB with RpoS, and the consequent delivery of the RssB-RpoS complex to the ClpXP protein degradation pathway. This is Anti-adapter protein IraP from Cronobacter sakazakii (strain ATCC BAA-894) (Enterobacter sakazakii).